Reading from the N-terminus, the 228-residue chain is Flagellar L-ring protein (228 aa).

An N-terminal signal peptide occupies residues 1–17 (MHYLRYFAIAFLLLLSS). The N-palmitoyl cysteine moiety is linked to residue C18. C18 carries the S-diacylglycerol cysteine lipid modification.

Belongs to the FlgH family. The basal body constitutes a major portion of the flagellar organelle and consists of four rings (L,P,S, and M) mounted on a central rod.

It is found in the cell membrane. It localises to the bacterial flagellum basal body. In terms of biological role, assembles around the rod to form the L-ring and probably protects the motor/basal body from shearing forces during rotation. The sequence is that of Flagellar L-ring protein from Wigglesworthia glossinidia brevipalpis.